Consider the following 305-residue polypeptide: Ferrochelatase (305 aa).

2 residues coordinate Fe cation: His182 and Glu262.

The protein belongs to the ferrochelatase family.

The protein resides in the cytoplasm. The catalysed reaction is heme b + 2 H(+) = protoporphyrin IX + Fe(2+). The protein operates within porphyrin-containing compound metabolism; protoheme biosynthesis; protoheme from protoporphyrin-IX: step 1/1. Functionally, catalyzes the ferrous insertion into protoporphyrin IX. The chain is Ferrochelatase from Herpetosiphon aurantiacus (strain ATCC 23779 / DSM 785 / 114-95).